The following is a 355-amino-acid chain: MSVLGELDLLGPRAHGAACGEAVLKAVAEDFQVDEVLDIPLSGEGEHLWLWVEKRGLNTEEAARRLGRAAGVQQKNVSYAGLKDRQALTRQWFSLHLPGKADPDLGAAEGADLRILRRTRHSRKLQRGAHAANGFTLRLTGLRAERALLDARLERIAADGVPNYFGLQRFGHGGGNLVDARSCAEQDLLPANRNLRSRFLSAGRSYLFNRLLAERVAEGSWNRAAVGDLLAFTDSRSFFLAGEEECRDARLAALDLHPTGPLWGEGDPPSGAGVLERELALAGSEPALCRWLAKAGMAHERRILRLPIQGLAWHYPEPDVLQLEFVLPAGCFATVVVREILDLVPTGQTENPCAY.

Residue aspartate 84 is the Nucleophile of the active site. The TRUD domain occupies 160-306 (GVPNYFGLQR…MAHERRILRL (147 aa)).

Belongs to the pseudouridine synthase TruD family.

It carries out the reaction uridine(13) in tRNA = pseudouridine(13) in tRNA. Its function is as follows. Responsible for synthesis of pseudouridine from uracil-13 in transfer RNAs. The polypeptide is tRNA pseudouridine synthase D (Pseudomonas aeruginosa (strain LESB58)).